We begin with the raw amino-acid sequence, 180 residues long: ATP synthase subunit delta (180 aa).

This sequence belongs to the ATPase delta chain family. F-type ATPases have 2 components, F(1) - the catalytic core - and F(0) - the membrane proton channel. F(1) has five subunits: alpha(3), beta(3), gamma(1), delta(1), epsilon(1). CF(0) has four main subunits: a(1), b(1), b'(1) and c(10-14). The alpha and beta chains form an alternating ring which encloses part of the gamma chain. F(1) is attached to F(0) by a central stalk formed by the gamma and epsilon chains, while a peripheral stalk is formed by the delta, b and b' chains.

It is found in the cellular thylakoid membrane. Its function is as follows. F(1)F(0) ATP synthase produces ATP from ADP in the presence of a proton or sodium gradient. F-type ATPases consist of two structural domains, F(1) containing the extramembraneous catalytic core and F(0) containing the membrane proton channel, linked together by a central stalk and a peripheral stalk. During catalysis, ATP synthesis in the catalytic domain of F(1) is coupled via a rotary mechanism of the central stalk subunits to proton translocation. This protein is part of the stalk that links CF(0) to CF(1). It either transmits conformational changes from CF(0) to CF(1) or is implicated in proton conduction. In Prochlorococcus marinus (strain MIT 9215), this protein is ATP synthase subunit delta.